Reading from the N-terminus, the 793-residue chain is Facilitated trehalose transporter Tret1 (793 aa).

The Cytoplasmic segment spans residues 1–326; that stretch reads MNRKVGPVLE…LEVYRPTTNP (326 aa). Disordered regions lie at residues 99–148 and 213–235; these read EKAK…EHKS and RHISFKFDKEPSPSSSDEDFEPS. The span at 104-113 shows a compositional bias: low complexity; sequence KSSLKSSRVS. Acidic residues predominate over residues 115-125; it reads DQEDDRFDEDE. Residues 213 to 223 are compositionally biased toward basic and acidic residues; that stretch reads RHISFKFDKEP. The helical transmembrane segment at 327–347 threads the bilayer; that stretch reads IYIWTQVLAALSVSLGSMVVG. At 348–376 the chain is on the extracellular side; sequence FSSAYTSPALVSMKDRNITSFEVTDQSGS. A glycan (N-linked (GlcNAc...) asparagine) is linked at asparagine 364. A helical membrane pass occupies residues 377–397; it reads WVGGIMPLAGLAGGILGGPMI. Residues 398–411 lie on the Cytoplasmic side of the membrane; it reads EYLGRKNTILATAT. The helical transmembrane segment at 412–432 threads the bilayer; that stretch reads PFIISWLLIGCATHVAMVLVG. At 433–434 the chain is on the extracellular side; sequence RA. Residues 435–455 form a helical membrane-spanning segment; it reads LSGLCVGIASLSLPVYLGETV. Residues 456 to 460 are Cytoplasmic-facing; the sequence is QPEVR. Residues 461 to 481 form a helical membrane-spanning segment; sequence GTLGLLPTAFGNIGILLCFVA. Residues 482–488 are Extracellular-facing; the sequence is GKYLDWS. A helical transmembrane segment spans residues 489-509; that stretch reads GLAFLGAALPIPFLLLMFLIP. Over 510 to 572 the chain is Cytoplasmic; sequence ETPRWYVSRN…DLLNKANLKP (63 aa). Residues 573-593 form a helical membrane-spanning segment; sequence LLISLGLMFFQQLSGINAVIF. The Extracellular portion of the chain corresponds to 594–609; sequence YTVQIFQSAGSTIDEK. A helical transmembrane segment spans residues 610–630; that stretch reads LCTIIVGVVNFIATFIATVLI. Topologically, residues 631 to 636 are cytoplasmic; it reads DRLGRK. Residues 637-657 traverse the membrane as a helical segment; sequence ILLYISDVAMIITLMTLGTFF. Residues 658 to 668 lie on the Extracellular side of the membrane; it reads YMKNNGDDVSE. Residues 669–689 form a helical membrane-spanning segment; the sequence is IGWLPLAAFVVFVVGFSLGFG. The Cytoplasmic portion of the chain corresponds to 690–703; it reads PIPWLMMGEILPGK. Residues 704 to 724 traverse the membrane as a helical segment; sequence IRGSAASVATAFNWSCTFVVT. Residues 725-737 are Extracellular-facing; the sequence is KTFADITASIGNH. The helical transmembrane segment at 738-758 threads the bilayer; it reads GAFWMFGSICIVGLLFVIVYV. Over 759-793 the chain is Cytoplasmic; it reads PETQGKSLEDIERKMMGRVRRMSSVANIKPLSFNM.

This sequence belongs to the major facilitator superfamily. Sugar transporter (TC 2.A.1.1) family. Trehalose transporter subfamily.

Its subcellular location is the cell membrane. In terms of biological role, high-capacity facilitative transporter for trehalose. Does not transport maltose, sucrose or lactose. Mediates the bidirectional transfer of trehalose. Responsible for the transport of trehalose synthesized in the fat body and the incorporation of trehalose into other tissues that require a carbon source, thereby regulating trehalose levels in the hemolymph. The protein is Facilitated trehalose transporter Tret1 of Anopheles gambiae (African malaria mosquito).